Reading from the N-terminus, the 158-residue chain is Transcription elongation factor GreB (158 aa).

The stretch at 53-75 (KRRLREIDRRVRFLTKRLEVLQI) forms a coiled coil.

The protein belongs to the GreA/GreB family. GreB subfamily.

Necessary for efficient RNA polymerase transcription elongation past template-encoded arresting sites. The arresting sites in DNA have the property of trapping a certain fraction of elongating RNA polymerases that pass through, resulting in locked ternary complexes. Cleavage of the nascent transcript by cleavage factors such as GreA or GreB allows the resumption of elongation from the new 3'terminus. GreB releases sequences of up to 9 nucleotides in length. In Haemophilus influenzae (strain ATCC 51907 / DSM 11121 / KW20 / Rd), this protein is Transcription elongation factor GreB.